The primary structure comprises 334 residues: 6-phosphogluconolactonase (334 aa).

It belongs to the cycloisomerase 2 family.

The catalysed reaction is 6-phospho-D-glucono-1,5-lactone + H2O = 6-phospho-D-gluconate + H(+). It functions in the pathway carbohydrate degradation; pentose phosphate pathway; D-ribulose 5-phosphate from D-glucose 6-phosphate (oxidative stage): step 2/3. Catalyzes the hydrolysis of 6-phosphogluconolactone to 6-phosphogluconate. The sequence is that of 6-phosphogluconolactonase from Buchnera aphidicola subsp. Acyrthosiphon pisum (strain APS) (Acyrthosiphon pisum symbiotic bacterium).